The following is a 512-amino-acid chain: Maturase K (512 aa).

This sequence belongs to the intron maturase 2 family. MatK subfamily.

It localises to the plastid. The protein localises to the chloroplast. In terms of biological role, usually encoded in the trnK tRNA gene intron. Probably assists in splicing its own and other chloroplast group II introns. The sequence is that of Maturase K from Oenothera glazioviana (Large-flowered evening primrose).